We begin with the raw amino-acid sequence, 341 residues long: Sulfate/thiosulfate import ATP-binding protein CysA 2 (341 aa).

The region spanning 3–235 is the ABC transporter domain; the sequence is IRLENVVKTF…PNSSFVMRFL (233 aa). Residue 35–42 participates in ATP binding; the sequence is GPSGSGKT.

This sequence belongs to the ABC transporter superfamily. Sulfate/tungstate importer (TC 3.A.1.6) family. As to quaternary structure, the complex is composed of two ATP-binding proteins (CysA), two transmembrane proteins (CysT and CysW) and a solute-binding protein (CysP).

It localises to the cell inner membrane. It catalyses the reaction sulfate(out) + ATP + H2O = sulfate(in) + ADP + phosphate + H(+). It carries out the reaction thiosulfate(out) + ATP + H2O = thiosulfate(in) + ADP + phosphate + H(+). Functionally, part of the ABC transporter complex CysAWTP involved in sulfate/thiosulfate import. Responsible for energy coupling to the transport system. This Agrobacterium fabrum (strain C58 / ATCC 33970) (Agrobacterium tumefaciens (strain C58)) protein is Sulfate/thiosulfate import ATP-binding protein CysA 2.